The sequence spans 519 residues: Probable DNA ligase (519 aa).

Position 221 (Glu-221) interacts with ATP. Lys-223 serves as the catalytic N6-AMP-lysine intermediate. Residues Arg-228, Arg-243, Glu-272, Phe-312, Arg-384, and Lys-390 each coordinate ATP.

Belongs to the ATP-dependent DNA ligase family. The cofactor is Mg(2+).

It carries out the reaction ATP + (deoxyribonucleotide)n-3'-hydroxyl + 5'-phospho-(deoxyribonucleotide)m = (deoxyribonucleotide)n+m + AMP + diphosphate.. DNA ligase that seals nicks in double-stranded DNA during DNA replication, DNA recombination and DNA repair. The sequence is that of Probable DNA ligase from Mycolicibacterium paratuberculosis (strain ATCC BAA-968 / K-10) (Mycobacterium paratuberculosis).